Reading from the N-terminus, the 608-residue chain is Phosphogluconate dehydratase (608 aa).

Positions 154 and 221 each coordinate [4Fe-4S] cluster.

It belongs to the IlvD/Edd family. The cofactor is [4Fe-4S] cluster.

It carries out the reaction 6-phospho-D-gluconate = 2-dehydro-3-deoxy-6-phospho-D-gluconate + H2O. It functions in the pathway carbohydrate metabolism; Entner-Doudoroff pathway. Functionally, catalyzes the dehydration of 6-phospho-D-gluconate to 2-dehydro-3-deoxy-6-phospho-D-gluconate. In Helicobacter pylori (strain ATCC 700392 / 26695) (Campylobacter pylori), this protein is Phosphogluconate dehydratase.